A 203-amino-acid chain; its full sequence is uncharacterized protein (203 aa).

Positions 90–188 (EKRQHVRVQP…YENIIGRYVM (99 aa)) constitute a PilZ domain.

It to A.aeolicus aq_820 and aq_1583.

This is an uncharacterized protein from Aquifex aeolicus (strain VF5).